The chain runs to 908 residues: Structural core protein VP2 (908 aa).

Polar residues predominate over residues 1-19 (MANPQNRVQTERQQNNSSP). The disordered stretch occupies residues 1–25 (MANPQNRVQTERQQNNSSPYLRGDE).

It belongs to the orbivirus VP3 family.

Its subcellular location is the virion. This chain is Structural core protein VP2 (Segment-2), found in Ixodes (gulls).